Consider the following 406-residue polypeptide: Argininosuccinate synthase (406 aa).

Residues 13–21 (AYSGGLDTS) and alanine 40 contribute to the ATP site. 2 residues coordinate L-citrulline: tyrosine 91 and serine 96. Residue glycine 121 participates in ATP binding. L-aspartate contacts are provided by threonine 123, asparagine 127, and aspartate 128. Asparagine 127 contacts L-citrulline. Positions 131, 182, 191, 267, and 279 each coordinate L-citrulline.

Belongs to the argininosuccinate synthase family. Type 1 subfamily. As to quaternary structure, homotetramer.

The protein resides in the cytoplasm. It carries out the reaction L-citrulline + L-aspartate + ATP = 2-(N(omega)-L-arginino)succinate + AMP + diphosphate + H(+). The protein operates within amino-acid biosynthesis; L-arginine biosynthesis; L-arginine from L-ornithine and carbamoyl phosphate: step 2/3. The polypeptide is Argininosuccinate synthase (Brucella anthropi (strain ATCC 49188 / DSM 6882 / CCUG 24695 / JCM 21032 / LMG 3331 / NBRC 15819 / NCTC 12168 / Alc 37) (Ochrobactrum anthropi)).